The chain runs to 221 residues: MNTKICVPVFEKTAPEVTESAGRAIDAGADILEIRIDGLQNPGEVNIRELIEDIGFPVIATNRSPVEGGHFSGSEDERIKLLMAAAEVADFVDIELSSAREDIERVTGSARRSIVSYHNFRETPSLEALLRIVRMAKEMGDIAKVAVMPENLADTLVVLQLLTFEEDTVAISMGELGKYTRVAAALFGSPITFASMGRGTAPGQMDVDVTRKMIGELMPED.

3-dehydroquinate contacts are provided by residues 33 to 35 (EIR) and Arg-63. The active-site Proton donor/acceptor is His-118. Residue Lys-144 is the Schiff-base intermediate with substrate of the active site. 3 residues coordinate 3-dehydroquinate: Arg-181, Thr-200, and Gln-204.

Belongs to the type-I 3-dehydroquinase family. Homodimer.

It carries out the reaction 3-dehydroquinate = 3-dehydroshikimate + H2O. The protein operates within metabolic intermediate biosynthesis; chorismate biosynthesis; chorismate from D-erythrose 4-phosphate and phosphoenolpyruvate: step 3/7. Its function is as follows. Involved in the third step of the chorismate pathway, which leads to the biosynthesis of aromatic amino acids. Catalyzes the cis-dehydration of 3-dehydroquinate (DHQ) and introduces the first double bond of the aromatic ring to yield 3-dehydroshikimate. This is 3-dehydroquinate dehydratase from Methanothermobacter thermautotrophicus (strain ATCC 29096 / DSM 1053 / JCM 10044 / NBRC 100330 / Delta H) (Methanobacterium thermoautotrophicum).